Here is an 815-residue protein sequence, read N- to C-terminus: Probable disease resistance protein At5g66910 (815 aa).

The region spanning 1–150 is the RPW8 domain; sequence MVVVDWLGLG…NINKKLDRLS (150 aa). NB-ARC domains lie at 156–283 and 341–440; these read PLVS…DVWQ and SPDE…DIWM. ATP is bound at residue 196-203; sequence GPPGCGKT. 4 LRR repeats span residues 656–678, 680–702, 704–726, and 728–750; these read NLQEIDIDYCYDLDELPYWIPEV, SLKTLSITNCNKLSQLPEAIGNL, RLEVLRMCSCMNLSELPEATERL, and NLRSLDISHCLGLRKLPQEIGKL.

This sequence belongs to the disease resistance NB-LRR family.

Its function is as follows. Probable disease resistance protein. The protein is Probable disease resistance protein At5g66910 of Arabidopsis thaliana (Mouse-ear cress).